A 265-amino-acid chain; its full sequence is Glutamate racemase (265 aa).

Substrate is bound by residues 12 to 13 and 44 to 45; these read DS and YG. C75 serves as the catalytic Proton donor/acceptor. 76–77 contacts substrate; the sequence is NT. The active-site Proton donor/acceptor is C186. 187–188 lines the substrate pocket; that stretch reads TH.

The protein belongs to the aspartate/glutamate racemases family.

The enzyme catalyses L-glutamate = D-glutamate. Its pathway is cell wall biogenesis; peptidoglycan biosynthesis. Functionally, provides the (R)-glutamate required for cell wall biosynthesis. In Pseudomonas putida (strain W619), this protein is Glutamate racemase.